Reading from the N-terminus, the 77-residue chain is MKEQKWIHEGLITESLPNGMFRVRLDNEDMILGYVSGKIRRSFIRILPGDRVKIEVSRYDSTRGRIIYRLRNKDSKD.

The region spanning 1–71 (MKEQKWIHEG…TRGRIIYRLR (71 aa)) is the S1-like domain.

Belongs to the IF-1 family. In terms of assembly, component of the 30S ribosomal translation pre-initiation complex which assembles on the 30S ribosome in the order IF-2 and IF-3, IF-1 and N-formylmethionyl-tRNA(fMet); mRNA recruitment can occur at any time during PIC assembly.

It is found in the plastid. It localises to the chloroplast. Its function is as follows. One of the essential components for the initiation of protein synthesis. Stabilizes the binding of IF-2 and IF-3 on the 30S subunit to which N-formylmethionyl-tRNA(fMet) subsequently binds. Helps modulate mRNA selection, yielding the 30S pre-initiation complex (PIC). Upon addition of the 50S ribosomal subunit IF-1, IF-2 and IF-3 are released leaving the mature 70S translation initiation complex. The sequence is that of Translation initiation factor IF-1, chloroplastic from Lactuca sativa (Garden lettuce).